A 769-amino-acid polypeptide reads, in one-letter code: Gephyrin (769 aa).

The tract at residues 14 to 153 (QIRVGVLTVS…LPGSKKGSQE (140 aa)) is MPT Mo-transferase. The interval 140 to 349 (LIINLPGSKK…VDITKVARRH (210 aa)) is interaction with GABARAP. 2 disordered regions span residues 181-232 (DELE…DSSS) and 260-299 (TASL…SKGV). Over residues 187–199 (PSPPPPLSPPPTT) the composition is skewed to pro residues. Residues Ser-188 and Ser-194 each carry the phosphoserine modification. A Phosphothreonine modification is found at Thr-198. Position 200 is a phosphoserine (Ser-200). Cys-212 carries S-palmitoyl cysteine lipidation. Residues 261–286 (ASLSTTPSESPRAQATSRLSTASCPT) are compositionally biased toward polar residues. Phosphoserine is present on Ser-262. Phosphothreonine is present on residues Thr-265 and Thr-266. Ser-268 and Ser-270 each carry phosphoserine. A lipid anchor (S-palmitoyl cysteine) is attached at Cys-284. Residues 327-769 (SSKENILRAS…VVDVMVIGRL (443 aa)) are MPT adenylyltransferase. Position 338 is a phosphoserine (Ser-338).

It in the N-terminal section; belongs to the MoaB/Mog family. In the C-terminal section; belongs to the MoeA family. As to quaternary structure, homotrimer, homodimer and homooligomer. Interacts with SRGAP2 (via SH3 domain). Interacts with GLRB. Interacts with GABARAP. Interacts with GABRA3. GABRA3 and GLRB occupy overlapping binding sites. Interacts with ARHGAP32; IQSEC3, INSYN1 and INSYN2A. Mg(2+) serves as cofactor. In terms of processing, palmitoylated. Palmitoylation is stimulated by GABA type A receptors activity. Palmitoylation by ZDHHC12 regulates clustering at synapses.

The protein resides in the postsynaptic cell membrane. It is found in the cell membrane. Its subcellular location is the cytoplasm. The protein localises to the cytosol. It localises to the cytoskeleton. The protein resides in the cell projection. It is found in the dendrite. Its subcellular location is the postsynaptic density. The enzyme catalyses molybdopterin + ATP + H(+) = adenylyl-molybdopterin + diphosphate. It carries out the reaction adenylyl-molybdopterin + molybdate = Mo-molybdopterin + AMP + H(+). The protein operates within cofactor biosynthesis; molybdopterin biosynthesis. Its activity is regulated as follows. Inhibited by copper and tungsten. Its function is as follows. Microtubule-associated protein involved in membrane protein-cytoskeleton interactions. It is thought to anchor the inhibitory glycine receptor (GLYR) to subsynaptic microtubules. Acts as a major instructive molecule at inhibitory synapses, where it also clusters GABA type A receptors. Also has a catalytic activity and catalyzes two steps in the biosynthesis of the molybdenum cofactor. In the first step, molybdopterin is adenylated. Subsequently, molybdate is inserted into adenylated molybdopterin and AMP is released. This is Gephyrin (Gphn) from Mus musculus (Mouse).